A 546-amino-acid polypeptide reads, in one-letter code: Chaperonin GroEL (546 aa).

ATP contacts are provided by residues threonine 30–proline 33, lysine 51, aspartate 87–threonine 91, glycine 415, and aspartate 497. The segment at proline 527–phenylalanine 546 is disordered. Positions proline 537 to phenylalanine 546 are enriched in gly residues.

This sequence belongs to the chaperonin (HSP60) family. As to quaternary structure, forms a cylinder of 14 subunits composed of two heptameric rings stacked back-to-back. Interacts with the co-chaperonin GroES.

It localises to the cytoplasm. The enzyme catalyses ATP + H2O + a folded polypeptide = ADP + phosphate + an unfolded polypeptide.. Functionally, together with its co-chaperonin GroES, plays an essential role in assisting protein folding. The GroEL-GroES system forms a nano-cage that allows encapsulation of the non-native substrate proteins and provides a physical environment optimized to promote and accelerate protein folding. The polypeptide is Chaperonin GroEL (Methylorubrum populi (strain ATCC BAA-705 / NCIMB 13946 / BJ001) (Methylobacterium populi)).